Reading from the N-terminus, the 380-residue chain is Erythronate-4-phosphate dehydrogenase (380 aa).

The substrate site is built by Ser45 and Thr66. Residues 126–127 (QV), Asp146, Thr174, 205–207 (ASR), and Asp231 each bind NAD(+). Arg207 is an active-site residue. Glu236 is an active-site residue. Catalysis depends on His253, which acts as the Proton donor. NAD(+) is bound at residue Gly256. Residue Tyr257 coordinates substrate.

It belongs to the D-isomer specific 2-hydroxyacid dehydrogenase family. PdxB subfamily. Homodimer.

It localises to the cytoplasm. It catalyses the reaction 4-phospho-D-erythronate + NAD(+) = (R)-3-hydroxy-2-oxo-4-phosphooxybutanoate + NADH + H(+). It participates in cofactor biosynthesis; pyridoxine 5'-phosphate biosynthesis; pyridoxine 5'-phosphate from D-erythrose 4-phosphate: step 2/5. Catalyzes the oxidation of erythronate-4-phosphate to 3-hydroxy-2-oxo-4-phosphonooxybutanoate. The protein is Erythronate-4-phosphate dehydrogenase of Pseudomonas savastanoi pv. phaseolicola (strain 1448A / Race 6) (Pseudomonas syringae pv. phaseolicola (strain 1448A / Race 6)).